We begin with the raw amino-acid sequence, 393 residues long: NADH-quinone oxidoreductase subunit D 2 (393 aa).

The protein belongs to the complex I 49 kDa subunit family. As to quaternary structure, NDH-1 is composed of 14 different subunits. Subunits NuoB, C, D, E, F, and G constitute the peripheral sector of the complex.

Its subcellular location is the cell inner membrane. The enzyme catalyses a quinone + NADH + 5 H(+)(in) = a quinol + NAD(+) + 4 H(+)(out). In terms of biological role, NDH-1 shuttles electrons from NADH, via FMN and iron-sulfur (Fe-S) centers, to quinones in the respiratory chain. The immediate electron acceptor for the enzyme in this species is believed to be a menaquinone. Couples the redox reaction to proton translocation (for every two electrons transferred, four hydrogen ions are translocated across the cytoplasmic membrane), and thus conserves the redox energy in a proton gradient. This is NADH-quinone oxidoreductase subunit D 2 from Cytophaga hutchinsonii (strain ATCC 33406 / DSM 1761 / CIP 103989 / NBRC 15051 / NCIMB 9469 / D465).